The chain runs to 63 residues: Cecropin-2 (63 aa).

Positions methionine 1–alanine 23 are cleaved as a signal peptide. The residue at position 62 (arginine 62) is an Arginine amide.

This sequence belongs to the cecropin family.

The protein localises to the secreted. Its function is as follows. Cecropins have lytic and antibacterial activity against several Gram-positive and Gram-negative bacteria. The chain is Cecropin-2 (Cec2A) from Drosophila virilis (Fruit fly).